Consider the following 180-residue polypeptide: Translation initiation factor IF-3 (180 aa).

The protein belongs to the IF-3 family. As to quaternary structure, monomer.

The protein resides in the cytoplasm. Functionally, IF-3 binds to the 30S ribosomal subunit and shifts the equilibrium between 70S ribosomes and their 50S and 30S subunits in favor of the free subunits, thus enhancing the availability of 30S subunits on which protein synthesis initiation begins. This Klebsiella pneumoniae protein is Translation initiation factor IF-3.